A 66-amino-acid polypeptide reads, in one-letter code: KEGYLVNKETGCKLACVTTGENKNCKLDCKNQGGSKGYCLLFRCFCEGLSESTPTFPIPGKTCSGK.

The LCN-type CS-alpha/beta domain maps to 1–64 (KEGYLVNKET…TFPIPGKTCS (64 aa)). 4 disulfides stabilise this stretch: C12–C63, C16–C39, C25–C44, and C29–C46.

It belongs to the long (4 C-C) scorpion toxin superfamily. Sodium channel inhibitor family. Expressed by the venom gland.

It is found in the secreted. Functionally, probable sodium channel inhibitor. This chain is Toxin NaTx-4, found in Centruroides sculpturatus (Arizona bark scorpion).